The primary structure comprises 270 residues: 4-hydroxy-tetrahydrodipicolinate reductase (270 aa).

7–12 (GVSGRM) contacts NAD(+). Arg-34 is a binding site for NADP(+). Residues 97–99 (GTT) and 121–124 (SGNM) contribute to the NAD(+) site. His-155 acts as the Proton donor/acceptor in catalysis. Residue His-156 coordinates (S)-2,3,4,5-tetrahydrodipicolinate. Residue Lys-159 is the Proton donor of the active site. 165-166 (GT) is a binding site for (S)-2,3,4,5-tetrahydrodipicolinate.

The protein belongs to the DapB family.

Its subcellular location is the cytoplasm. It catalyses the reaction (S)-2,3,4,5-tetrahydrodipicolinate + NAD(+) + H2O = (2S,4S)-4-hydroxy-2,3,4,5-tetrahydrodipicolinate + NADH + H(+). It carries out the reaction (S)-2,3,4,5-tetrahydrodipicolinate + NADP(+) + H2O = (2S,4S)-4-hydroxy-2,3,4,5-tetrahydrodipicolinate + NADPH + H(+). It functions in the pathway amino-acid biosynthesis; L-lysine biosynthesis via DAP pathway; (S)-tetrahydrodipicolinate from L-aspartate: step 4/4. Its function is as follows. Catalyzes the conversion of 4-hydroxy-tetrahydrodipicolinate (HTPA) to tetrahydrodipicolinate. This is 4-hydroxy-tetrahydrodipicolinate reductase from Allorhizobium ampelinum (strain ATCC BAA-846 / DSM 112012 / S4) (Agrobacterium vitis (strain S4)).